We begin with the raw amino-acid sequence, 121 residues long: Ribosome-binding factor A (121 aa).

It belongs to the RbfA family. In terms of assembly, monomer. Binds 30S ribosomal subunits, but not 50S ribosomal subunits or 70S ribosomes.

Its subcellular location is the cytoplasm. In terms of biological role, one of several proteins that assist in the late maturation steps of the functional core of the 30S ribosomal subunit. Associates with free 30S ribosomal subunits (but not with 30S subunits that are part of 70S ribosomes or polysomes). Required for efficient processing of 16S rRNA. May interact with the 5'-terminal helix region of 16S rRNA. The sequence is that of Ribosome-binding factor A from Clostridium acetobutylicum (strain ATCC 824 / DSM 792 / JCM 1419 / IAM 19013 / LMG 5710 / NBRC 13948 / NRRL B-527 / VKM B-1787 / 2291 / W).